The chain runs to 376 residues: Uroporphyrinogen decarboxylase (376 aa).

Substrate contacts are provided by residues 29–33, Asp79, Tyr155, Ser210, and His342; that span reads RQAGR.

It belongs to the uroporphyrinogen decarboxylase family. As to quaternary structure, homodimer.

It is found in the cytoplasm. It carries out the reaction uroporphyrinogen III + 4 H(+) = coproporphyrinogen III + 4 CO2. Its pathway is porphyrin-containing compound metabolism; protoporphyrin-IX biosynthesis; coproporphyrinogen-III from 5-aminolevulinate: step 4/4. In terms of biological role, catalyzes the decarboxylation of four acetate groups of uroporphyrinogen-III to yield coproporphyrinogen-III. This Paracidovorax citrulli (strain AAC00-1) (Acidovorax citrulli) protein is Uroporphyrinogen decarboxylase.